The sequence spans 2443 residues: NFX1-type zinc finger-containing protein 1 homolog (2443 aa).

Disordered stretches follow at residues 212–339 (PHKQ…EGDH), 545–566 (SSDSGRQVLSESRGAGSSNVYG), and 583–672 (HRDN…FVSP). A compositionally biased stretch (low complexity) spans 246–263 (ISISNSSPPGLSSVSPIP). Pro residues predominate over residues 275–294 (PQPPGLSIPAPPGISLPTPP). The span at 297–310 (SLQNHQNDQFEQAH) shows a compositional bias: polar residues. Positions 311-322 (STISRMSENSSS) are enriched in low complexity. Residues 545-564 (SSDSGRQVLSESRGAGSSNV) are compositionally biased toward polar residues. Basic and acidic residues-rich tracts occupy residues 601-638 (GEVHRRLDEQQQQRHEDESSRYRDDSRQSRRADDRRDQ) and 662-672 (EHSRDDKFVSP). The UvrD-like helicase ATP-binding domain occupies 1040–1545 (MDESQRLAFC…MNLTISDKIV (506 aa)). 1061–1068 (GPPGTGKT) provides a ligand contact to ATP. 4 consecutive NF-X1-type zinc fingers follow at residues 1769–1791 (CGHVCERLCHPNMEEEHLQRCLY), 1853–1873 (CGHACAAKCGEECTLVSECSQ), 1912–1930 (CPHKCAEICGQPCTVECME), and 2027–2044 (CGHTCSAKCGESCPPCKA).

This sequence belongs to the ZNFX1 family. Interacts with ego-1, csr-1, wago-1 and prg-1. Interacts with wago-4; the interaction promotes the transmission of epigenetic information across generations. Expressed in germs cells. Not expressed in somatic tissues.

The protein resides in the cytoplasm. The protein localises to the perinuclear region. Its subcellular location is the cytoplasmic granule. It catalyses the reaction ATP + H2O = ADP + phosphate + H(+). Epigenetic inheritance factor which, in association with the Argonaute protein wago-4, mediates small RNA-directed transgenerational epigenetic inheritance and thus balances the transgenerational inheritance of epigenetic information. Specifically, maintains a balanced production of small RNAs by preventing the spread of epigenetic signals towards the 5'-end of target mRNAs. Plays a role in small RNA-induced gene silencing in the germline. The protein is NFX1-type zinc finger-containing protein 1 homolog of Caenorhabditis elegans.